We begin with the raw amino-acid sequence, 203 residues long: Small ribosomal subunit protein uS4 (203 aa).

Positions 93–156 (RRLDNVVYRL…MKVPAILEAV (64 aa)) constitute an S4 RNA-binding domain.

It belongs to the universal ribosomal protein uS4 family. Part of the 30S ribosomal subunit. Contacts protein S5. The interaction surface between S4 and S5 is involved in control of translational fidelity.

In terms of biological role, one of the primary rRNA binding proteins, it binds directly to 16S rRNA where it nucleates assembly of the body of the 30S subunit. Functionally, with S5 and S12 plays an important role in translational accuracy. In Streptococcus pyogenes serotype M49 (strain NZ131), this protein is Small ribosomal subunit protein uS4.